Consider the following 414-residue polypeptide: Eukaryotic initiation factor 4A-3 (414 aa).

The Q motif signature appears at 41–69 (ESFDDMGLQENLLRGIYAYGFEKPSAIQQ). In terms of domain architecture, Helicase ATP-binding spans 72–242 (IVPFCKGLDV…RKFMNKPVRI (171 aa)). 85–92 (AQSGTGKT) contributes to the ATP binding site. Residues 190 to 193 (DEAD) carry the DEAD box motif. The region spanning 253–414 (GIKQFYVNVE…ELPANVADLL (162 aa)) is the Helicase C-terminal domain.

The protein belongs to the DEAD box helicase family. eIF4A subfamily. EIF4F is a multi-subunit complex, the composition of which varies with external and internal environmental conditions. It is composed of at least EIF4A, EIF4E and EIF4G. Interacts with DRM2 (via UBA domains).

The protein resides in the cytoplasm. It is found in the nucleus. The enzyme catalyses ATP + H2O = ADP + phosphate + H(+). Functionally, ATP-dependent RNA helicase which is a subunit of the eIF4F complex involved in cap recognition and is required for mRNA binding to ribosome. In the current model of translation initiation, eIF4A unwinds RNA secondary structures in the 5'-UTR of mRNAs which is necessary to allow efficient binding of the small ribosomal subunit, and subsequent scanning for the initiator codon. In Oryza sativa subsp. japonica (Rice), this protein is Eukaryotic initiation factor 4A-3.